Consider the following 79-residue polypeptide: ATP synthase subunit c (79 aa).

The next 2 helical transmembrane spans lie at 11–31 (MAAA…IGIL) and 53–73 (FFIV…LGLY).

Belongs to the ATPase C chain family. As to quaternary structure, F-type ATPases have 2 components, F(1) - the catalytic core - and F(0) - the membrane proton channel. F(1) has five subunits: alpha(3), beta(3), gamma(1), delta(1), epsilon(1). F(0) has three main subunits: a(1), b(2) and c(10-14). The alpha and beta chains form an alternating ring which encloses part of the gamma chain. F(1) is attached to F(0) by a central stalk formed by the gamma and epsilon chains, while a peripheral stalk is formed by the delta and b chains.

It localises to the cell inner membrane. Functionally, f(1)F(0) ATP synthase produces ATP from ADP in the presence of a proton or sodium gradient. F-type ATPases consist of two structural domains, F(1) containing the extramembraneous catalytic core and F(0) containing the membrane proton channel, linked together by a central stalk and a peripheral stalk. During catalysis, ATP synthesis in the catalytic domain of F(1) is coupled via a rotary mechanism of the central stalk subunits to proton translocation. Its function is as follows. Key component of the F(0) channel; it plays a direct role in translocation across the membrane. A homomeric c-ring of between 10-14 subunits forms the central stalk rotor element with the F(1) delta and epsilon subunits. The sequence is that of ATP synthase subunit c from Proteus mirabilis (strain HI4320).